The primary structure comprises 207 residues: Zinc finger protein 487 (207 aa).

Positions 1–43 (MLENYSLLLSVGYCITKPEVVCKLEHGQVLWILEEESPSQSHL) constitute a KRAB domain. The C2H2-type; atypical zinc-finger motif lies at 177–202 (KQCFEYNQCGKAFHEEAACSTHKRVC).

The protein belongs to the krueppel C2H2-type zinc-finger protein family.

Its subcellular location is the nucleus. Functionally, may be involved in transcriptional regulation. In Homo sapiens (Human), this protein is Zinc finger protein 487 (ZNF487).